The sequence spans 149 residues: UPF0310 protein msl3206 (149 aa).

This sequence belongs to the UPF0310 family.

This is UPF0310 protein msl3206 from Mesorhizobium japonicum (strain LMG 29417 / CECT 9101 / MAFF 303099) (Mesorhizobium loti (strain MAFF 303099)).